Here is a 246-residue protein sequence, read N- to C-terminus: tRNA pseudouridine synthase A (246 aa).

Aspartate 52 acts as the Nucleophile in catalysis. Tyrosine 111 lines the substrate pocket.

Belongs to the tRNA pseudouridine synthase TruA family. In terms of assembly, homodimer.

The enzyme catalyses uridine(38/39/40) in tRNA = pseudouridine(38/39/40) in tRNA. Its function is as follows. Formation of pseudouridine at positions 38, 39 and 40 in the anticodon stem and loop of transfer RNAs. The protein is tRNA pseudouridine synthase A of Rhodopseudomonas palustris (strain BisA53).